The following is a 198-amino-acid chain: Recombination protein RecR (198 aa).

A C4-type zinc finger spans residues 56 to 71; that stretch reads CTECRDFSETKICAIC. In terms of domain architecture, Toprim spans 79–174; it reads HQLCVVESPP…RPSRLAQGLP (96 aa).

It belongs to the RecR family.

May play a role in DNA repair. It seems to be involved in an RecBC-independent recombinational process of DNA repair. It may act with RecF and RecO. The sequence is that of Recombination protein RecR from Xylella fastidiosa (strain 9a5c).